We begin with the raw amino-acid sequence, 613 residues long: Probable Xaa-Pro aminopeptidase P (613 aa).

The Mn(2+) site is built by Asp-408, Asp-419, Glu-517, and Glu-531.

Belongs to the peptidase M24B family. It depends on Mn(2+) as a cofactor.

The enzyme catalyses Release of any N-terminal amino acid, including proline, that is linked to proline, even from a dipeptide or tripeptide.. Functionally, catalyzes the removal of a penultimate prolyl residue from the N-termini of peptides. This Penicillium rubens (strain ATCC 28089 / DSM 1075 / NRRL 1951 / Wisconsin 54-1255) (Penicillium chrysogenum) protein is Probable Xaa-Pro aminopeptidase P (ampp).